Here is a 234-residue protein sequence, read N- to C-terminus: Demethylmenaquinone methyltransferase (234 aa).

S-adenosyl-L-methionine-binding positions include T62, D80, 100-101 (DA), and S117.

This sequence belongs to the class I-like SAM-binding methyltransferase superfamily. MenG/UbiE family.

It catalyses the reaction a 2-demethylmenaquinol + S-adenosyl-L-methionine = a menaquinol + S-adenosyl-L-homocysteine + H(+). The protein operates within quinol/quinone metabolism; menaquinone biosynthesis; menaquinol from 1,4-dihydroxy-2-naphthoate: step 2/2. Methyltransferase required for the conversion of demethylmenaquinol (DMKH2) to menaquinol (MKH2). This is Demethylmenaquinone methyltransferase from Mycobacterium bovis (strain ATCC BAA-935 / AF2122/97).